We begin with the raw amino-acid sequence, 284 residues long: MKIIETVSEMQHFSESLRIAEKRLGVVPTMGALHDGHLSLVKLALKHADVAIMTIFVNPLQFGPSEDFAKYPRTFERDAMLAEKAGVSCIFAPTPETLYPSGFQTHVTVDEITQGFEGELRPGHFRGVTTVVAKLFNITKPHVAVFGEKDAQQLAAIRKMQKDLNFDVEIVPAPIVRETDGLAKSSRNIYLNPAERKQAVVLNESLEIAKSAIQHGERNVKTLLEVLNRHIQSAPLAEPDYIAIVDAESFQPVQEELLAEETYLVLLTVRFGSTRLLDNCRIEL.

Residue 30–37 (MGALHDGH) coordinates ATP. Catalysis depends on His-37, which acts as the Proton donor. Gln-61 contacts (R)-pantoate. Gln-61 provides a ligand contact to beta-alanine. Residue 147 to 150 (GEKD) coordinates ATP. Gln-153 lines the (R)-pantoate pocket. ATP contacts are provided by residues Val-176 and 184 to 187 (KSSR).

The protein belongs to the pantothenate synthetase family. As to quaternary structure, homodimer.

It localises to the cytoplasm. The enzyme catalyses (R)-pantoate + beta-alanine + ATP = (R)-pantothenate + AMP + diphosphate + H(+). Its pathway is cofactor biosynthesis; (R)-pantothenate biosynthesis; (R)-pantothenate from (R)-pantoate and beta-alanine: step 1/1. Catalyzes the condensation of pantoate with beta-alanine in an ATP-dependent reaction via a pantoyl-adenylate intermediate. This is Pantothenate synthetase from Chloroherpeton thalassium (strain ATCC 35110 / GB-78).